We begin with the raw amino-acid sequence, 88 residues long: Molybdopterin synthase sulfur carrier subunit (88 aa).

G88 is modified (1-thioglycine; alternate). The residue at position 88 (G88) is a Glycyl adenylate; alternate.

This sequence belongs to the MoaD family. MOCS2A subfamily. In terms of assembly, heterotetramer; composed of 2 small (MOCS2A) and 2 large (MOCS2B) subunits. In terms of processing, C-terminal thiocarboxylation occurs in 2 steps, it is first acyl-adenylated (-COAMP) via the hesA/moeB/thiF part of uba4, then thiocarboxylated (-COSH) via the rhodanese domain of uba4.

Its subcellular location is the cytoplasm. The protein operates within cofactor biosynthesis; molybdopterin biosynthesis. In terms of biological role, acts as a sulfur carrier required for molybdopterin biosynthesis. Component of the molybdopterin synthase complex that catalyzes the conversion of precursor Z into molybdopterin by mediating the incorporation of 2 sulfur atoms into precursor Z to generate a dithiolene group. In the complex, serves as sulfur donor by being thiocarboxylated (-COSH) at its C-terminus by uba4. After interaction with MOCS2B, the sulfur is then transferred to precursor Z to form molybdopterin. The protein is Molybdopterin synthase sulfur carrier subunit of Aspergillus niger (strain ATCC MYA-4892 / CBS 513.88 / FGSC A1513).